Consider the following 170-residue polypeptide: Ribosome maturation factor RimM (170 aa).

A PRC barrel domain is found at 97–170; it reads NADEYYWVDL…LVVVDWDPEF (74 aa).

This sequence belongs to the RimM family. As to quaternary structure, binds ribosomal protein uS19.

It is found in the cytoplasm. Its function is as follows. An accessory protein needed during the final step in the assembly of 30S ribosomal subunit, possibly for assembly of the head region. Essential for efficient processing of 16S rRNA. May be needed both before and after RbfA during the maturation of 16S rRNA. It has affinity for free ribosomal 30S subunits but not for 70S ribosomes. In Stenotrophomonas maltophilia (strain R551-3), this protein is Ribosome maturation factor RimM.